The following is a 201-amino-acid chain: FMN reductase (NADH) RutF (201 aa).

The disordered stretch occupies residues 169-201; the sequence is APRSGAAPAEPARAARALGARPAEGPALALRSA.

It belongs to the non-flavoprotein flavin reductase family. RutF subfamily.

The enzyme catalyses FMNH2 + NAD(+) = FMN + NADH + 2 H(+). Its function is as follows. Catalyzes the reduction of FMN to FMNH2 which is used to reduce pyrimidine by RutA via the Rut pathway. This is FMN reductase (NADH) RutF from Methylorubrum extorquens (strain ATCC 14718 / DSM 1338 / JCM 2805 / NCIMB 9133 / AM1) (Methylobacterium extorquens).